Here is a 220-residue protein sequence, read N- to C-terminus: Fructose-6-phosphate aldolase (220 aa).

K85 functions as the Schiff-base intermediate with substrate in the catalytic mechanism.

Belongs to the transaldolase family. Type 3A subfamily. As to quaternary structure, homodecamer.

Its subcellular location is the cytoplasm. The enzyme catalyses beta-D-fructose 6-phosphate = dihydroxyacetone + D-glyceraldehyde 3-phosphate. Functionally, catalyzes the reversible formation of fructose 6-phosphate from dihydroxyacetone and D-glyceraldehyde 3-phosphate via an aldolization reaction. The sequence is that of Fructose-6-phosphate aldolase from Salmonella gallinarum (strain 287/91 / NCTC 13346).